The chain runs to 308 residues: Testis-specific Y-encoded protein 3 (308 aa).

It belongs to the nucleosome assembly protein (NAP) family.

The protein resides in the cytoplasm. Its subcellular location is the nucleus. In terms of biological role, may be involved in sperm differentiation and proliferation. In Homo sapiens (Human), this protein is Testis-specific Y-encoded protein 3 (TSPY3).